A 274-amino-acid chain; its full sequence is NAD kinase (274 aa).

Asp59 acts as the Proton acceptor in catalysis. NAD(+)-binding positions include 59-60 (DG), Lys64, 128-129 (ND), Asp158, 169-174 (TAYALS), and Ala193.

Belongs to the NAD kinase family. A divalent metal cation is required as a cofactor.

The protein localises to the cytoplasm. It catalyses the reaction NAD(+) + ATP = ADP + NADP(+) + H(+). Functionally, involved in the regulation of the intracellular balance of NAD and NADP, and is a key enzyme in the biosynthesis of NADP. Catalyzes specifically the phosphorylation on 2'-hydroxyl of the adenosine moiety of NAD to yield NADP. The chain is NAD kinase from Petrotoga mobilis (strain DSM 10674 / SJ95).